A 1766-amino-acid chain; its full sequence is E3 ubiquitin-protein ligase listerin (1766 aa).

A compositionally biased stretch (basic residues) spans 1–11; it reads MGGKNKQRTKG. Residues 1 to 20 are disordered; sequence MGGKNKQRTKGNVRPSSSGR. 5 HEAT repeats span residues 100-138, 193-231, 292-329, 335-372, and 512-549; these read KGVL…KVKK, VLQD…SLLA, AEAP…TIED, NARK…KVPP, and EKTL…DEDE. The segment at 529 to 567 is disordered; it reads KTATKPNNRKSLKVKFSDEDESERNTENGKITEVRSNSD. A compositionally biased stretch (basic and acidic residues) spans 551-566; sequence ERNTENGKITEVRSNS. HEAT repeat units lie at residues 606–644, 672–710, 916–953, 1184–1227, 1314–1355, and 1406–1447; these read EQHL…ESQE, KDMH…KWIV, QVLI…NRTE, HLLP…MIRY, GIHN…YISK, and SKLM…TQEL. The RING-type zinc-finger motif lies at 1715-1762; it reads CMICFSVIHGSNYSLPKKACRTCKKKFHSACLYKWFTSSNKSTCPLCR.

Belongs to the LTN1 family. Component of the ribosome quality control complex (RQC), composed of at least the E3 ubiquitin ligase LTN1 and NEMF associated with the 60S ribosomal subunit. The complex probably also contains TCF25 as well as VCP/p97 and its ubiquitin-binding cofactors.

Its subcellular location is the cytoplasm. It localises to the cytosol. The enzyme catalyses S-ubiquitinyl-[E2 ubiquitin-conjugating enzyme]-L-cysteine + [acceptor protein]-L-lysine = [E2 ubiquitin-conjugating enzyme]-L-cysteine + N(6)-ubiquitinyl-[acceptor protein]-L-lysine.. Its pathway is protein modification; protein ubiquitination. In terms of biological role, E3 ubiquitin-protein ligase component of the ribosome quality control complex (RQC), a ribosome-associated complex that mediates ubiquitination and extraction of incompletely synthesized nascent chains for proteasomal degradation. Within the RQC complex, LTN1 is recruited to stalled 60S ribosomal subunits by NEMF and mediates ubiquitination of stalled nascent chains. Ubiquitination leads to VCP/p97 recruitment for extraction and degradation of the incomplete translation product. The polypeptide is E3 ubiquitin-protein ligase listerin (LTN1) (Gallus gallus (Chicken)).